Consider the following 185-residue polypeptide: Pyruvate/ketoisovalerate oxidoreductases common subunit gamma (185 aa).

As to quaternary structure, heterotetramer of one alpha, one beta, one delta and one gamma chain.

The catalysed reaction is 2 oxidized [2Fe-2S]-[ferredoxin] + pyruvate + CoA = 2 reduced [2Fe-2S]-[ferredoxin] + acetyl-CoA + CO2 + H(+). It carries out the reaction 3-methyl-2-oxobutanoate + 2 oxidized [2Fe-2S]-[ferredoxin] + CoA = 2-methylpropanoyl-CoA + 2 reduced [2Fe-2S]-[ferredoxin] + CO2 + H(+). This Thermococcus litoralis (strain ATCC 51850 / DSM 5473 / JCM 8560 / NS-C) protein is Pyruvate/ketoisovalerate oxidoreductases common subunit gamma (porG).